Reading from the N-terminus, the 679-residue chain is tRNA uridine 5-carboxymethylaminomethyl modification enzyme MnmG (679 aa).

An FAD-binding site is contributed by 15–20 (GAGHAG). Residue 314–328 (GPRYCPSIEDKIVRF) participates in NAD(+) binding.

Belongs to the MnmG family. In terms of assembly, homodimer. Heterotetramer of two MnmE and two MnmG subunits. FAD serves as cofactor.

The protein resides in the cytoplasm. Its function is as follows. NAD-binding protein involved in the addition of a carboxymethylaminomethyl (cmnm) group at the wobble position (U34) of certain tRNAs, forming tRNA-cmnm(5)s(2)U34. The sequence is that of tRNA uridine 5-carboxymethylaminomethyl modification enzyme MnmG from Roseiflexus sp. (strain RS-1).